A 399-amino-acid chain; its full sequence is Stearoyl-[acyl-carrier-protein] 9-desaturase, chloroplastic (399 aa).

The segment covering 1–12 (MALNLNPVSTPF) has biased composition (polar residues). The N-terminal 35 residues, 1–35 (MALNLNPVSTPFQCRRLPSFSPRQTPSRRSPKFFM), are a transit peptide targeting the chloroplast. Residues 1–57 (MALNLNPVSTPFQCRRLPSFSPRQTPSRRSPKFFMASTLSSSSPKEAESLKKPFSPP) form a disordered region. Residues Glu141, Glu179, His182, Glu232, Glu265, and His268 each contribute to the Fe cation site.

It belongs to the fatty acid desaturase type 2 family. Homodimer. Fe(2+) is required as a cofactor.

Its subcellular location is the plastid. It is found in the chloroplast. The catalysed reaction is octadecanoyl-[ACP] + 2 reduced [2Fe-2S]-[ferredoxin] + O2 + 2 H(+) = (9Z)-octadecenoyl-[ACP] + 2 oxidized [2Fe-2S]-[ferredoxin] + 2 H2O. It participates in lipid metabolism; fatty acid metabolism. In terms of biological role, converts stearoyl-ACP to oleoyl-ACP by introduction of a cis double bond between carbons 9 and 10 of the acyl chain. This chain is Stearoyl-[acyl-carrier-protein] 9-desaturase, chloroplastic, found in Spinacia oleracea (Spinach).